A 77-amino-acid chain; its full sequence is Acyl carrier protein (77 aa).

The region spanning 2–77 (SDIADRVKKI…DAVKFIQGAV (76 aa)) is the Carrier domain. The residue at position 37 (S37) is an O-(pantetheine 4'-phosphoryl)serine.

It belongs to the acyl carrier protein (ACP) family. Post-translationally, 4'-phosphopantetheine is transferred from CoA to a specific serine of apo-ACP by AcpS. This modification is essential for activity because fatty acids are bound in thioester linkage to the sulfhydryl of the prosthetic group.

Its subcellular location is the cytoplasm. It functions in the pathway lipid metabolism; fatty acid biosynthesis. Carrier of the growing fatty acid chain in fatty acid biosynthesis. The chain is Acyl carrier protein from Paracoccus denitrificans (strain Pd 1222).